A 719-amino-acid polypeptide reads, in one-letter code: DNA ligase (719 aa).

NAD(+) contacts are provided by residues 42 to 46 (DAAYD), 92 to 93 (SL), and Glu126. The active-site N6-AMP-lysine intermediate is Lys128. Residues Arg149, Glu185, Lys301, and Lys325 each contribute to the NAD(+) site. Zn(2+) is bound by residues Cys430, Cys433, Cys448, and Cys454. One can recognise a BRCT domain in the interval 640-719 (ATGSPVEGKT…DDWFKLVGED (80 aa)).

It belongs to the NAD-dependent DNA ligase family. LigA subfamily. Mg(2+) serves as cofactor. Mn(2+) is required as a cofactor.

The enzyme catalyses NAD(+) + (deoxyribonucleotide)n-3'-hydroxyl + 5'-phospho-(deoxyribonucleotide)m = (deoxyribonucleotide)n+m + AMP + beta-nicotinamide D-nucleotide.. Its function is as follows. DNA ligase that catalyzes the formation of phosphodiester linkages between 5'-phosphoryl and 3'-hydroxyl groups in double-stranded DNA using NAD as a coenzyme and as the energy source for the reaction. It is essential for DNA replication and repair of damaged DNA. In Brucella melitensis biotype 1 (strain ATCC 23456 / CCUG 17765 / NCTC 10094 / 16M), this protein is DNA ligase.